A 1396-amino-acid polypeptide reads, in one-letter code: ATP-binding cassette transporter pdr1 (1396 aa).

The tract at residues 1–22 is disordered; that stretch reads MSEQEKGKGDLDDPNSKNTKCP. One can recognise an ABC transporter 1 domain in the interval 73–320; the sequence is LHPINIIFRT…FLDLGFIPAK (248 aa). Residues 412–622 form the ABC transmembrane type-2 1 domain; that stretch reads LQVFATAKVT…GYESIMLNEF (211 aa). 6 consecutive transmembrane segments (helical) span residues 431-451, 466-486, 512-532, 543-563, 572-592, and 680-700; these read YIAT…SLFY, VLSN…DIIF, LVEF…VYFL, FIFY…FRFI, IAAL…GAVM, and GIIL…ANFI. Residues 758–1001 enclose the ABC transporter 2 domain; sequence LCWRDLNFTV…LVNYFKRIHG (244 aa). 794-801 serves as a coordination point for ATP; the sequence is GENKSGKS. One can recognise an ABC transmembrane type-2 2 domain in the interval 1071 to 1286; the sequence is FQIYKISMRN…FLEGMIGGVL (216 aa). 5 consecutive transmembrane segments (helical) span residues 1095-1115, 1166-1186, 1208-1228, 1245-1265, and 1361-1381; these read VAFN…QGVG, FIIA…TLFF, FAWL…IGIA, FVFI…VGFW, and CIMI…YYII.

This sequence belongs to the ABC transporter superfamily. ABCG family. PDR (TC 3.A.1.205) subfamily.

Its subcellular location is the endoplasmic reticulum membrane. In Schizosaccharomyces pombe (strain 972 / ATCC 24843) (Fission yeast), this protein is ATP-binding cassette transporter pdr1 (pdr1).